Consider the following 587-residue polypeptide: Protein SIX6OS1 (587 aa).

The segment at 356–378 is disordered; the sequence is TPQKQSNSNQWSEKGDKDAEYGD. Residues 357–367 are compositionally biased toward polar residues; that stretch reads PQKQSNSNQWS. Basic and acidic residues predominate over residues 368–378; the sequence is EKGDKDAEYGD. Ser-439 is subject to Phosphoserine. The disordered stretch occupies residues 568–587; the sequence is SSSLKGFSSSSQNTTQFTFF.

In terms of assembly, interacts with SYCE1. Interacts with proteasome subunit PSMA8; to participate in meiosis progression during spermatogenesis. In terms of tissue distribution, highest expression in retina, skeletal muscle, testis and colon.

It is found in the chromosome. Meiotic protein that localizes to the central element of the synaptonemal complex and is required for chromosome synapsis during meiotic recombination. Required for the appropriate processing of intermediate recombination nodules before crossover formation. This Homo sapiens (Human) protein is Protein SIX6OS1.